We begin with the raw amino-acid sequence, 298 residues long: Junctional adhesion molecule B (298 aa).

The first 28 residues, 1 to 28 (MARSPQGLLMLLLLHYLIVALDYHKANG), serve as a signal peptide directing secretion. Residues 29-236 (FSASKDHRQE…GKRMQVDVLN (208 aa)) lie on the Extracellular side of the membrane. The Ig-like V-type domain occupies 32 to 128 (SKDHRQEVTV…GQNLQEDKVM (97 aa)). 2 disulfide bridges follow: Cys51–Cys110 and Cys156–Cys214. N-linked (GlcNAc...) asparagine glycosylation occurs at Asn99. An Ig-like C2-type domain is found at 135-238 (PAVPACEVPT…RMQVDVLNIS (104 aa)). Residues 237–257 (ISGIIATVVVVAFVISVCGLG) form a helical membrane-spanning segment. The Cytoplasmic segment spans residues 258–298 (TCYAQRKGYFSKETSFQKGSPASKVTTMSENDFKHTKSFII).

The protein belongs to the immunoglobulin superfamily. In terms of processing, the expression in Sertoli cells is regulated by TGFB3 through ubiquitin-mediated proteasomal degradation. As to expression, expressed by bone marrow stromal cells (at protein level). Expressed in skin (at protein level). Expressed in testis by Sertoli cells (at protein level). Expressed by dorsal root ganglion and spinal cord neurons.

It is found in the cell membrane. Its subcellular location is the cell junction. The protein localises to the tight junction. Functionally, junctional adhesion protein that mediates heterotypic cell-cell interactions with its cognate receptor JAM3 to regulate different cellular processes. Plays a role in homing and mobilization of hematopoietic stem and progenitor cells within the bone marrow. At the surface of bone marrow stromal cells, it contributes to the retention of the hematopoietic stem and progenitor cells expressing JAM3. Plays a central role in leukocytes extravasation by facilitating not only transmigration but also tethering and rolling of leukocytes along the endothelium. Tethering and rolling of leukocytes are dependent on the binding by JAM2 of the integrin alpha-4/beta-1. Plays a role in spermatogenesis where JAM2 and JAM3, which are respectively expressed by Sertoli and germ cells, mediate an interaction between both cell types and play an essential role in the anchorage of germ cells onto Sertoli cells and the assembly of cell polarity complexes during spermatid differentiation. Also functions as an inhibitory somatodendritic cue that prevents the myelination of non-axonal parts of neurons. During myogenesis, it is involved in myocyte fusion. May also play a role in angiogenesis. In Mus musculus (Mouse), this protein is Junctional adhesion molecule B.